The sequence spans 404 residues: Serine/threonine-protein phosphatase 2A regulatory subunit rsa-1 (404 aa).

Part of a complex consisting of a common heterodimeric core enzyme, composed of catalytic subunit let-92 and constant regulatory subunit paa-1, that associates with a variety of regulatory subunits which confer distinct properties to the holoenzyme. Interacts with rsa-2, spd-5 and tpxl-1.

It localises to the cytoplasm. It is found in the cytoskeleton. The protein resides in the microtubule organizing center. Its subcellular location is the centrosome. Regulatory subunit of phosphatase let-92 which recruits let-92/paa-1 complex to the centrosomes, thereby regulating microtubule outgrowth from centrosomes and mitotic spindle assembly ensuring the stability of kinetochore microtubules. The protein is Serine/threonine-protein phosphatase 2A regulatory subunit rsa-1 of Caenorhabditis elegans.